The sequence spans 1801 residues: U3 small nucleolar RNA-associated protein 10 (1801 aa).

The stretch at 582-619 (IDFQALVPFVLVALGDVSERIRREAAAVLAALGALYKK) is one HEAT 1 repeat. The next 2 helical transmembrane spans lie at 945–965 (IQSGMSYLLSLALGSLLAIVN) and 1001–1021 (ALLLVAGLSVIAPELVLHSVM). 4 HEAT repeats span residues 1045–1082 (QTIDQVVPALIQSLRNQKRDVVSGTSELLLSFTAAFEH), 1252–1289 (LSLIDFLDTIEILLQRPGDELRRKVLRLLEGRLRQNPE), 1296–1334 (NRMLDFLPTLVTIVESSPDILLKHAAVACIDRITEKYGK), and 1757–1794 (ALLPEMLPYISELMEDEDENVEREVRRWVKQIEDVLGE).

This sequence belongs to the HEATR1/UTP10 family. As to quaternary structure, component of the ribosomal small subunit (SSU) processome.

It is found in the nucleus. The protein localises to the nucleolus. The protein resides in the membrane. Its function is as follows. Involved in nucleolar processing of pre-18S ribosomal RNA. Involved in ribosome biosynthesis. The protein is U3 small nucleolar RNA-associated protein 10 of Aspergillus terreus (strain NIH 2624 / FGSC A1156).